The chain runs to 871 residues: Tegument protein UL47 homolog (871 aa).

Positions M1–D212 are disordered. A Nuclear localization signal motif is present at residues I13–T33. Composition is skewed to polar residues over residues T30–R41 and E59–F81. 3 stretches are compositionally biased toward acidic residues: residues S114–Q134, S146–D155, and S185–M207.

It belongs to the alphaherpesvirinae HHV-1 UL47 family. In terms of assembly, interacts with US3 kinase. Interacts with UL31 and UL34; these interactions seem important for efficient virion nuclear egress. Interacts with UL41/VHS. In terms of processing, phosphorylated by US3. This phosphorylation is required for proper nuclear localization.

Its subcellular location is the virion tegument. The protein resides in the host nucleus. The protein localises to the host cytoplasm. Tegument protein that can bind to various RNA transcripts. Plays a role in the attenuation of selective viral and cellular mRNA degradation by modulating the activity of host shutoff RNase UL41/VHS. Also plays a role in the primary envelopment of virions in the perinuclear space, probably by interacting with two nuclear egress proteins UL31 and UL34. This is Tegument protein UL47 homolog from Equus caballus (Horse).